A 268-amino-acid chain; its full sequence is Shikimate kinase (268 aa).

An ATP-binding site is contributed by 70-80 (PSGYGLKSSSA).

Belongs to the GHMP kinase family. Archaeal shikimate kinase subfamily.

It is found in the cytoplasm. It carries out the reaction shikimate + ATP = 3-phosphoshikimate + ADP + H(+). It participates in metabolic intermediate biosynthesis; chorismate biosynthesis; chorismate from D-erythrose 4-phosphate and phosphoenolpyruvate: step 5/7. The protein is Shikimate kinase (aroK) of Thermoplasma acidophilum (strain ATCC 25905 / DSM 1728 / JCM 9062 / NBRC 15155 / AMRC-C165).